Here is a 234-residue protein sequence, read N- to C-terminus: Small ribosomal subunit protein uS2c (234 aa).

Belongs to the universal ribosomal protein uS2 family.

It localises to the plastid. It is found in the chloroplast. The protein is Small ribosomal subunit protein uS2c (rps2) of Pinus koraiensis (Korean pine).